A 266-amino-acid chain; its full sequence is Phosphatidylglycerol--prolipoprotein diacylglyceryl transferase (266 aa).

The next 7 membrane-spanning stretches (helical) occupy residues valine 10–isoleucine 30, leucine 56–tyrosine 76, tryptophan 92–phenylalanine 112, phenylalanine 120–isoleucine 140, proline 172–tyrosine 192, methionine 200–valine 220, and tryptophan 234–alanine 254. Arginine 139 lines the a 1,2-diacyl-sn-glycero-3-phospho-(1'-sn-glycerol) pocket.

The protein belongs to the Lgt family.

Its subcellular location is the cell inner membrane. The catalysed reaction is L-cysteinyl-[prolipoprotein] + a 1,2-diacyl-sn-glycero-3-phospho-(1'-sn-glycerol) = an S-1,2-diacyl-sn-glyceryl-L-cysteinyl-[prolipoprotein] + sn-glycerol 1-phosphate + H(+). Its pathway is protein modification; lipoprotein biosynthesis (diacylglyceryl transfer). Functionally, catalyzes the transfer of the diacylglyceryl group from phosphatidylglycerol to the sulfhydryl group of the N-terminal cysteine of a prolipoprotein, the first step in the formation of mature lipoproteins. The sequence is that of Phosphatidylglycerol--prolipoprotein diacylglyceryl transferase from Ectopseudomonas mendocina (strain ymp) (Pseudomonas mendocina).